A 1051-amino-acid chain; its full sequence is Carbamoyl phosphate synthase large chain (1051 aa).

The carboxyphosphate synthetic domain stretch occupies residues 1-399 (MKETPKKVLV…SLQKAVRMLD (399 aa)). ATP contacts are provided by Arg-127, Arg-167, Gly-173, Gly-174, Lys-206, Leu-208, Glu-213, Gly-239, Val-240, His-241, Gln-282, and Glu-296. In terms of domain architecture, ATP-grasp 1 spans 131 to 325 (RETMIENNLP…LAYVSAKLAL (195 aa)). Residues Gln-282, Glu-296, and Asn-298 each coordinate Mg(2+). Mn(2+) contacts are provided by Gln-282, Glu-296, and Asn-298. The oligomerization domain stretch occupies residues 400–548 (IGEPGVVGGK…LTYNGTEDDL (149 aa)). Residues 549–930 (EFSQGNKLLI…LKSWLSSIPN (382 aa)) are carbamoyl phosphate synthetic domain. In terms of domain architecture, ATP-grasp 2 spans 673-863 (SKLLDKLGIS…LINESMKAIF (191 aa)). 10 residues coordinate ATP: Arg-709, Lys-748, Ile-750, Glu-755, Gly-779, Val-780, His-781, Ser-782, Gln-822, and Glu-834. Residues Gln-822, Glu-834, and Asn-836 each coordinate Mg(2+). Residues Gln-822, Glu-834, and Asn-836 each contribute to the Mn(2+) site. Positions 930 to 1051 (NRIPNKNGIA…FEISEYGGGI (122 aa)) constitute an MGS-like domain. The allosteric domain stretch occupies residues 931-1051 (RIPNKNGIAL…FEISEYGGGI (121 aa)).

The protein belongs to the CarB family. Composed of two chains; the small (or glutamine) chain promotes the hydrolysis of glutamine to ammonia, which is used by the large (or ammonia) chain to synthesize carbamoyl phosphate. Tetramer of heterodimers (alpha,beta)4. The cofactor is Mg(2+). It depends on Mn(2+) as a cofactor.

The enzyme catalyses hydrogencarbonate + L-glutamine + 2 ATP + H2O = carbamoyl phosphate + L-glutamate + 2 ADP + phosphate + 2 H(+). It catalyses the reaction hydrogencarbonate + NH4(+) + 2 ATP = carbamoyl phosphate + 2 ADP + phosphate + 2 H(+). It functions in the pathway amino-acid biosynthesis; L-arginine biosynthesis; carbamoyl phosphate from bicarbonate: step 1/1. Its pathway is pyrimidine metabolism; UMP biosynthesis via de novo pathway; (S)-dihydroorotate from bicarbonate: step 1/3. Functionally, large subunit of the glutamine-dependent carbamoyl phosphate synthetase (CPSase). CPSase catalyzes the formation of carbamoyl phosphate from the ammonia moiety of glutamine, carbonate, and phosphate donated by ATP, constituting the first step of 2 biosynthetic pathways, one leading to arginine and/or urea and the other to pyrimidine nucleotides. The large subunit (synthetase) binds the substrates ammonia (free or transferred from glutamine from the small subunit), hydrogencarbonate and ATP and carries out an ATP-coupled ligase reaction, activating hydrogencarbonate by forming carboxy phosphate which reacts with ammonia to form carbamoyl phosphate. This is Carbamoyl phosphate synthase large chain from Saccharolobus islandicus (strain M.16.27) (Sulfolobus islandicus).